We begin with the raw amino-acid sequence, 228 residues long: Pyridoxamine 5'-phosphate oxidase (228 aa).

Pyridoxal 5'-phosphate is bound at residue 20–23 (QYDK). A Glycyl lysine isopeptide (Lys-Gly) (interchain with G-Cter in ubiquitin) cross-link involves residue lysine 29. 73 to 76 (RILL) contributes to the FMN binding site. Lysine 78 is a pyridoxal 5'-phosphate binding site. FMN is bound by residues 88 to 89 (YS), 95 to 96 (RK), and glutamine 118. 3 residues coordinate pyridoxal 5'-phosphate: tyrosine 136, arginine 140, and serine 144. Residues 153-154 (QS) and tryptophan 199 each bind FMN. 205–207 (RLH) serves as a coordination point for pyridoxal 5'-phosphate. Arginine 209 lines the FMN pocket.

The protein belongs to the pyridoxamine 5'-phosphate oxidase family. Homodimer. FMN is required as a cofactor.

Its subcellular location is the mitochondrion intermembrane space. It catalyses the reaction pyridoxamine 5'-phosphate + O2 + H2O = pyridoxal 5'-phosphate + H2O2 + NH4(+). The catalysed reaction is pyridoxine 5'-phosphate + O2 = pyridoxal 5'-phosphate + H2O2. It functions in the pathway cofactor metabolism; pyridoxal 5'-phosphate salvage; pyridoxal 5'-phosphate from pyridoxamine 5'-phosphate: step 1/1. The protein operates within cofactor metabolism; pyridoxal 5'-phosphate salvage; pyridoxal 5'-phosphate from pyridoxine 5'-phosphate: step 1/1. In terms of biological role, catalyzes the oxidation of either pyridoxine 5'-phosphate (PNP) or pyridoxamine 5'-phosphate (PMP) into pyridoxal 5'-phosphate (PLP). This Saccharomyces cerevisiae (strain ATCC 204508 / S288c) (Baker's yeast) protein is Pyridoxamine 5'-phosphate oxidase (PDX3).